A 530-amino-acid chain; its full sequence is Histone-arginine methyltransferase CARMER (530 aa).

The SAM-dependent MTase PRMT-type domain occupies 141-450 (ASQYFQFYGY…QSYDVTIDLH (310 aa)). S-adenosyl-L-methionine contacts are provided by Gln154, Arg163, Gly187, Glu209, Glu238, and Thr266. Residue Arg501 is modified to Asymmetric dimethylarginine; by autocatalysis.

It belongs to the class I-like SAM-binding methyltransferase superfamily. Protein arginine N-methyltransferase family. Homodimer. The dimethylated protein is the major form.

It localises to the cytoplasm. The protein resides in the nucleus. The catalysed reaction is L-arginyl-[protein] + 2 S-adenosyl-L-methionine = N(omega),N(omega)-dimethyl-L-arginyl-[protein] + 2 S-adenosyl-L-homocysteine + 2 H(+). In terms of biological role, methylates (mono- and asymmetric dimethylation) the guanidino nitrogens of arginyl residues in proteins. May methylate histone H3 at 'Arg-17' and activate transcription via chromatin remodeling. The sequence is that of Histone-arginine methyltransferase CARMER (Art4) from Drosophila yakuba (Fruit fly).